The primary structure comprises 318 residues: Triplex capsid protein 2 (318 aa).

It belongs to the herpesviridae TRX2 protein family. Interacts with TRX1 and major capisd protein/MCP.

It is found in the virion. The protein resides in the host nucleus. Structural component of the T=16 icosahedral capsid. The capsid is composed of pentamers and hexamers of major capsid protein/MCP, which are linked together by heterotrimers called triplexes. These triplexes are formed by a single molecule of triplex protein 1/TRX1 and two copies of triplex protein 2/TRX2. Additionally, TRX1 is required for efficient transport of TRX2 to the nucleus, which is the site of capsid assembly. This chain is Triplex capsid protein 2, found in Human herpesvirus 2 (strain HG52) (HHV-2).